We begin with the raw amino-acid sequence, 163 residues long: Small ribosomal subunit protein uS9 (163 aa).

A compositionally biased stretch (polar residues) spans 1-11 (MAENTNDSQVV). Residues 1–40 (MAENTNDSQVVETEEELTNYTTETNAGAGTGTSAIEPGYG) form a disordered region. Residues 18–27 (TNYTTETNAG) show a composition bias toward low complexity.

Belongs to the universal ribosomal protein uS9 family.

This chain is Small ribosomal subunit protein uS9, found in Bifidobacterium longum (strain DJO10A).